Consider the following 284-residue polypeptide: Signal peptidase I (284 aa).

Residues 4-22 (NFPLLLVIAVAVCGALALV) traverse the membrane as a helical segment. Residues 23-58 (DLVLFAPRRRAAISSYEGQVNEPDPAVLEKLNKEPL) lie on the Cytoplasmic side of the membrane. Residues 59-77 (LVEYGKSFFPVLFIVLVLR) form a helical membrane-spanning segment. Over 78–284 (SFLVEPFQIP…PNFSRVGVIH (207 aa)) the chain is Periplasmic. Residues Ser90 and Lys145 contribute to the active site.

This sequence belongs to the peptidase S26 family.

Its subcellular location is the cell inner membrane. It carries out the reaction Cleavage of hydrophobic, N-terminal signal or leader sequences from secreted and periplasmic proteins.. The sequence is that of Signal peptidase I (lepB) from Pseudomonas aeruginosa (strain ATCC 15692 / DSM 22644 / CIP 104116 / JCM 14847 / LMG 12228 / 1C / PRS 101 / PAO1).